The following is a 60-amino-acid chain: UPF0291 protein Nther_1806 (60 aa).

This sequence belongs to the UPF0291 family.

It localises to the cytoplasm. In Natranaerobius thermophilus (strain ATCC BAA-1301 / DSM 18059 / JW/NM-WN-LF), this protein is UPF0291 protein Nther_1806.